The sequence spans 366 residues: Ferredoxin--NADP reductase, leaf isozyme 2, chloroplastic (366 aa).

A chloroplast-targeting transit peptide spans 1-48 (MAAVNTVSSLPCSKAGAAVAGGAPRPSTCSVFYPPRCWSKRSSGNGVR). Residues 87–209 (KEPYTGRCLL…TGPVGKEMLM (123 aa)) form the FAD-binding FR-type domain. FAD-binding positions include 145 to 148 (RLYS), 166 to 168 (CVK), Y172, and 183 to 185 (VCS). Residues S148 and K168 each contribute to the NADP(+) site. C184 and C189 are disulfide-bonded. Phosphoserine is present on S185. T216 bears the Phosphothreonine mark. T224 is an FAD binding site. NADP(+) contacts are provided by residues T224, 256 to 257 (VP), 286 to 287 (SR), K296, 325 to 326 (GL), and E364.

Belongs to the ferredoxin--NADP reductase type 1 family. Heterodimer with LFNR1. Component of high molecular weight thylakoid LFNRs-containing protein complexes containing LIR1, LFNR1, LFNR2, TIC62 and TROL proteins. Interacts directly with LFNR1 and LFNR2; LIR1 increases the affinity of LFNR1 and LFNR2 for TIC62 and subsequent thylakoid relocalization. It depends on FAD as a cofactor. In terms of processing, may form interchain disulfide bonds with LIR1.

Its subcellular location is the plastid. It localises to the chloroplast stroma. The protein localises to the chloroplast thylakoid membrane. The catalysed reaction is 2 reduced [2Fe-2S]-[ferredoxin] + NADP(+) + H(+) = 2 oxidized [2Fe-2S]-[ferredoxin] + NADPH. Its pathway is energy metabolism; photosynthesis. Functionally, plays a key role in regulating the relative amounts of cyclic and non-cyclic electron flow to meet the demands of the plant for ATP and reducing power. In Oryza sativa subsp. indica (Rice), this protein is Ferredoxin--NADP reductase, leaf isozyme 2, chloroplastic.